A 1194-amino-acid chain; its full sequence is ATP-dependent RNA helicase DHX30 (1194 aa).

The segment covering 1–10 (MFSLDSFRKD) has biased composition (basic and acidic residues). A disordered region spans residues 1 to 27 (MFSLDSFRKDRAQHRQRQCKLPPPRLP). A phosphoserine mark is found at Ser6 and Arg15. One can recognise a DRBM domain in the interval 53 to 121 (PKNLLNSVIG…QAAAAACQLF (69 aa)). Residues 150–199 (ADSWWRPEPTMPPTSWRQLNPESIRPGGPGGLSRSLGREEEEDEEEELEE) form a disordered region. Residues 188–199 (EEEEDEEEELEE) show a composition bias toward acidic residues. Phosphoserine occurs at positions 226 and 380. Residues 444–612 (LNAIEQHPVV…FGGCPVIKVP (169 aa)) enclose the Helicase ATP-binding domain. 457–464 (GDTGCGKT) provides a ligand contact to ATP. The DEAH box motif lies at 559 to 562 (DEVH). In terms of domain architecture, Helicase C-terminal spans 654–827 (LVTDLVLHID…NLVLQAKIHM (174 aa)).

It belongs to the DEAD box helicase family. DEAH subfamily. In terms of assembly, identified in a complex with TFAM and SSBP1. Interacts with AGO1 and AGO2. Interacts (via N-terminus) with ZC3HAV1 (via N-terminal domain) in an RNA-independent manner. Found in a complex with GRSF1, DDX28, FASTKD2 and FASTKD5. Phosphorylated on Ser-15.

It localises to the cytoplasm. The protein localises to the mitochondrion. It is found in the mitochondrion matrix. Its subcellular location is the mitochondrion nucleoid. The enzyme catalyses ATP + H2O = ADP + phosphate + H(+). Functionally, RNA-dependent helicase. Plays an important role in the assembly of the mitochondrial large ribosomal subunit. Required for optimal function of the zinc-finger antiviral protein ZC3HAV1. Associates with mitochondrial DNA. Involved in nervous system development and differentiation through its involvement in the up-regulation of a number of genes which are required for neurogenesis, including GSC, NCAM1, neurogenin, and NEUROD. The protein is ATP-dependent RNA helicase DHX30 (DHX30) of Homo sapiens (Human).